A 245-amino-acid polypeptide reads, in one-letter code: Endonuclease III (245 aa).

In terms of domain architecture, HhH spans 119–138; the sequence is MVDLFTLPGVGRKTANVILG. Cys198, Cys205, Cys208, and Cys214 together coordinate [4Fe-4S] cluster.

It belongs to the Nth/MutY family. [4Fe-4S] cluster serves as cofactor.

The enzyme catalyses 2'-deoxyribonucleotide-(2'-deoxyribose 5'-phosphate)-2'-deoxyribonucleotide-DNA = a 3'-end 2'-deoxyribonucleotide-(2,3-dehydro-2,3-deoxyribose 5'-phosphate)-DNA + a 5'-end 5'-phospho-2'-deoxyribonucleoside-DNA + H(+). DNA repair enzyme that has both DNA N-glycosylase activity and AP-lyase activity. The DNA N-glycosylase activity releases various damaged pyrimidines from DNA by cleaving the N-glycosidic bond, leaving an AP (apurinic/apyrimidinic) site. The AP-lyase activity cleaves the phosphodiester bond 3' to the AP site by a beta-elimination, leaving a 3'-terminal unsaturated sugar and a product with a terminal 5'-phosphate. The chain is Endonuclease III from Mycobacterium leprae (strain TN).